The sequence spans 417 residues: Serine hydroxymethyltransferase (417 aa).

(6S)-5,6,7,8-tetrahydrofolate contacts are provided by residues Leu-121 and 125–127 (GHL). Lys-229 bears the N6-(pyridoxal phosphate)lysine mark. A (6S)-5,6,7,8-tetrahydrofolate-binding site is contributed by 355 to 357 (SPF).

This sequence belongs to the SHMT family. As to quaternary structure, homodimer. It depends on pyridoxal 5'-phosphate as a cofactor.

Its subcellular location is the cytoplasm. The enzyme catalyses (6R)-5,10-methylene-5,6,7,8-tetrahydrofolate + glycine + H2O = (6S)-5,6,7,8-tetrahydrofolate + L-serine. It functions in the pathway one-carbon metabolism; tetrahydrofolate interconversion. It participates in amino-acid biosynthesis; glycine biosynthesis; glycine from L-serine: step 1/1. In terms of biological role, catalyzes the reversible interconversion of serine and glycine with tetrahydrofolate (THF) serving as the one-carbon carrier. This reaction serves as the major source of one-carbon groups required for the biosynthesis of purines, thymidylate, methionine, and other important biomolecules. Also exhibits THF-independent aldolase activity toward beta-hydroxyamino acids, producing glycine and aldehydes, via a retro-aldol mechanism. The sequence is that of Serine hydroxymethyltransferase from Aeromonas salmonicida (strain A449).